The chain runs to 345 residues: UDP-3-O-acylglucosamine N-acyltransferase (345 aa).

The active-site Proton acceptor is His241.

It belongs to the transferase hexapeptide repeat family. LpxD subfamily. Homotrimer.

The catalysed reaction is a UDP-3-O-[(3R)-3-hydroxyacyl]-alpha-D-glucosamine + a (3R)-hydroxyacyl-[ACP] = a UDP-2-N,3-O-bis[(3R)-3-hydroxyacyl]-alpha-D-glucosamine + holo-[ACP] + H(+). It functions in the pathway bacterial outer membrane biogenesis; LPS lipid A biosynthesis. In terms of biological role, catalyzes the N-acylation of UDP-3-O-acylglucosamine using 3-hydroxyacyl-ACP as the acyl donor. Is involved in the biosynthesis of lipid A, a phosphorylated glycolipid that anchors the lipopolysaccharide to the outer membrane of the cell. The chain is UDP-3-O-acylglucosamine N-acyltransferase from Desulfotalea psychrophila (strain LSv54 / DSM 12343).